Consider the following 508-residue polypeptide: CBL-interacting protein kinase 19 (508 aa).

The segment at 1 to 24 is disordered; sequence MAATPPSSQHRRPLSSSASAASLA. Residues 14–24 are compositionally biased toward low complexity; the sequence is LSSSASAASLA. In terms of domain architecture, Protein kinase spans 37-291; that stretch reads YELGRLLGHG…VKEVMESRWF (255 aa). Residues 43–51 and Lys-66 each bind ATP; that span reads LGHGTFAKV. Catalysis depends on Asp-159, which acts as the Proton acceptor. Residues 177–206 form an activation loop region; that stretch reads DFGLSAVADQFHPDGLLHTFCGTPSYVAPE. The interval 311–372 is disordered; that stretch reads ADGDNDMPEL…EERRQRPLGS (62 aa). Over residues 313–322 the composition is skewed to acidic residues; the sequence is GDNDMPELEP. Residues 323–337 are compositionally biased toward pro residues; sequence SEPPPPPPFPPPPPQ. The span at 338 to 347 shows a compositional bias: acidic residues; the sequence is QDDDGEESGW. The 45-residue stretch at 354 to 398 folds into the NAF domain; it reads ASCPATLSSEERRQRPLGSLTRPASLNAFDIISFSKGFDLSGLFE. Residues 401-430 are PPI; that stretch reads GSEVRFISAEPMQTIITKLEEIAKVKSFFV.

The protein belongs to the protein kinase superfamily. CAMK Ser/Thr protein kinase family. SNF1 subfamily. Mn(2+) is required as a cofactor. In terms of processing, autophosphorylated. Expressed in roots, leaf blades and sheaths and panicles.

The catalysed reaction is L-seryl-[protein] + ATP = O-phospho-L-seryl-[protein] + ADP + H(+). The enzyme catalyses L-threonyl-[protein] + ATP = O-phospho-L-threonyl-[protein] + ADP + H(+). Its function is as follows. CIPK serine-threonine protein kinases interact with CBL proteins. Binding of a CBL protein to the regulatory NAF domain of CIPK protein lead to the activation of the kinase in a calcium-dependent manner. This chain is CBL-interacting protein kinase 19 (CIPK19), found in Oryza sativa subsp. japonica (Rice).